The sequence spans 190 residues: ATP synthase subunit delta (190 aa).

The protein belongs to the ATPase delta chain family. In terms of assembly, F-type ATPases have 2 components, F(1) - the catalytic core - and F(0) - the membrane proton channel. F(1) has five subunits: alpha(3), beta(3), gamma(1), delta(1), epsilon(1). F(0) has three main subunits: a(1), b(2) and c(10-14). The alpha and beta chains form an alternating ring which encloses part of the gamma chain. F(1) is attached to F(0) by a central stalk formed by the gamma and epsilon chains, while a peripheral stalk is formed by the delta and b chains.

Its subcellular location is the cell inner membrane. In terms of biological role, f(1)F(0) ATP synthase produces ATP from ADP in the presence of a proton or sodium gradient. F-type ATPases consist of two structural domains, F(1) containing the extramembraneous catalytic core and F(0) containing the membrane proton channel, linked together by a central stalk and a peripheral stalk. During catalysis, ATP synthesis in the catalytic domain of F(1) is coupled via a rotary mechanism of the central stalk subunits to proton translocation. This protein is part of the stalk that links CF(0) to CF(1). It either transmits conformational changes from CF(0) to CF(1) or is implicated in proton conduction. The polypeptide is ATP synthase subunit delta (Methylobacterium sp. (strain 4-46)).